Reading from the N-terminus, the 68-residue chain is Pleurocidin (68 aa).

An N-terminal signal peptide occupies residues 1-22 (MKFTATFLMMAIFVLMVEPGEC). Positions 48–68 (GDKQELNKRAVDEDPNVIVFE) are excised as a propeptide.

It belongs to the pleurocidin family. As to expression, goblet cells.

It localises to the secreted. Its subcellular location is the membrane. Functionally, antimicrobial peptide with potent activity against Gram-positive and Gram-negative bacteria. Activity against E.coli and B.subtilis. Weaker activity against L.mucor, s.marcescens and P.aeruginosa. May play a role in innate host defense. This is Pleurocidin (ple1) from Pseudopleuronectes americanus (Winter flounder).